Reading from the N-terminus, the 745-residue chain is Exocyst complex component 3 (745 aa).

Residue lysine 28 is modified to N6-acetyllysine.

Belongs to the SEC6 family. As to quaternary structure, the exocyst complex is composed of EXOC1, EXOC2, EXOC3, EXOC4, EXOC5, EXOC6, EXOC7 and EXOC8. Interacts with EXOC3L1. Interacts with BIRC6/bruce. Interacts with MYRIP. Interacts with SLC6A9.

The protein localises to the cytoplasm. It localises to the perinuclear region. Its subcellular location is the cell projection. The protein resides in the growth cone. It is found in the neuron projection. The protein localises to the midbody. It localises to the golgi apparatus. Its function is as follows. Component of the exocyst complex involved in the docking of exocytic vesicles with fusion sites on the plasma membrane. This is Exocyst complex component 3 (EXOC3) from Bos taurus (Bovine).